Consider the following 588-residue polypeptide: MIQHPRIGIRPTIDGRRQGVRESLEVQTMNMAKSVADLISSTLKYPDGEPVECVISPSTIGRVPEAAASHELFKKSNVCATITVTPCWCYGSETMDMSPDIPHAIWGFNGTERPGAVYLAAVLASHTQKGIPAFGIYGRDVQEANDTAIPEDVKEKLLRYARAALATGLMRDTAYLSMGSVSMGIGGSIVNPDFFQEYLGMRNESVDMTEFTRRMDRGIYDPEEFERALKWVKENVKEGFDHNREDLVLSREEKDRQWEFVIKMFMIGRDLMVGNPRLAELGFEEEAVGHHALVAGFQGQRQWTDHFPNGDFMETFLNTQFDWNGIRKPFVFATENDSLNGVSMLFNYLLTNTPQIFADVRTYWSPEAVERVTGYTLEGRAAAGFLHLINSGSCTLDGTGQATRDGKPVMKPFWELDESEVQAMLENTDFPPANREYFRGGGFSTRFLTKGDMPVTMVRLNLLKGVGPVLQIAEGYTLELPEDVHHTLDNRTDPGWPTTWFAPRLTGKGAFKSVYDVMNNWGANHGAITYGHIGADLITLASMLRIPVNMHNVPEEDIFRPKNWSLFGTEDLESADYRACQLLGPLHK.

Catalysis depends on proton acceptor residues Glu-335 and Asp-359. Residues Glu-335, Asp-359, and His-525 each contribute to the Mn(2+) site.

The protein belongs to the L-fucose isomerase family. It depends on Mn(2+) as a cofactor.

It is found in the cytoplasm. It catalyses the reaction L-fucose = L-fuculose. It functions in the pathway carbohydrate degradation; L-fucose degradation; L-lactaldehyde and glycerone phosphate from L-fucose: step 1/3. Functionally, converts the aldose L-fucose into the corresponding ketose L-fuculose. This is L-fucose isomerase from Streptococcus pneumoniae (strain P1031).